Consider the following 299-residue polypeptide: MIRRQKYGDEIAKAQVLIEALPYIKKFSGTTVVIKYGGSAMLDCNLKRMVMQDIVLMKFVGLNPIVVHGGGPEINKMLERLGIESKFVNGLRVTDEATMEIVEMVLTGRINKEIVSLINELGGQAIGVSGKDGRLLKAEKDTSNGDIGYVGKIVDVNIDVITMMLEKGYIPVIAPTSFGDDGKTYNVNADTAAGKIAEALKAEKLILLTDVEGILSNINDKSSLISRMDLEHAKEFMNSGRINGGMIPKLECCIKAVENGVKRAHIIDGRLTHSLLLEIFTDEGIGTMIGKECFDDDNL.

Residues 70 to 71 (GG), R92, and N186 each bind substrate.

Belongs to the acetylglutamate kinase family. ArgB subfamily.

Its subcellular location is the cytoplasm. The enzyme catalyses N-acetyl-L-glutamate + ATP = N-acetyl-L-glutamyl 5-phosphate + ADP. Its pathway is amino-acid biosynthesis; L-arginine biosynthesis; N(2)-acetyl-L-ornithine from L-glutamate: step 2/4. Functionally, catalyzes the ATP-dependent phosphorylation of N-acetyl-L-glutamate. In Thermoanaerobacter sp. (strain X514), this protein is Acetylglutamate kinase.